The primary structure comprises 211 residues: Peptide methionine sulfoxide reductase MsrA (211 aa).

Residue Cys-60 is part of the active site.

The protein belongs to the MsrA Met sulfoxide reductase family.

The catalysed reaction is L-methionyl-[protein] + [thioredoxin]-disulfide + H2O = L-methionyl-(S)-S-oxide-[protein] + [thioredoxin]-dithiol. The enzyme catalyses [thioredoxin]-disulfide + L-methionine + H2O = L-methionine (S)-S-oxide + [thioredoxin]-dithiol. Its function is as follows. Has an important function as a repair enzyme for proteins that have been inactivated by oxidation. Catalyzes the reversible oxidation-reduction of methionine sulfoxide in proteins to methionine. The protein is Peptide methionine sulfoxide reductase MsrA of Methanosarcina mazei (strain ATCC BAA-159 / DSM 3647 / Goe1 / Go1 / JCM 11833 / OCM 88) (Methanosarcina frisia).